The following is a 1053-amino-acid chain: LRR receptor-like serine/threonine-protein kinase GHR1 (1053 aa).

A signal peptide spans 1–18 (MNLSRILLLSMFFLSAMG). Residues 19-630 (QLPSQDIMAL…NKSTNKLVKV (612 aa)) lie on the Extracellular side of the membrane. 13 LRR repeats span residues 73 to 93 (GVVLDNLGLTADADFSLFSNL), 94 to 119 (TKLVKLSMSNNSLSGVLPNDLGSFKS), 121 to 141 (QFLDLSDNLFSSSLPKEIGRS), 142 to 165 (VSLRNLSLSGNNFSGEIPESMGGL), 166 to 189 (ISLQSLDMSSNSLSGPLPKSLTRL), 191 to 212 (DLLYLNLSSNGFTGKMPRGFEL), 213 to 237 (ISSLEVLDLHGNSIDGNLDGEFFLL), 239 to 260 (NASYVDISGNRLVTTSGKLLPG), 262 to 285 (SESIKHLNLSHNQLEGSLTSGFQL), 286 to 309 (FQNLKVLDLSYNMLSGELPGFNYV), 310 to 333 (YDLEVLKLSNNRFSGSLPNNLLKG), 335 to 357 (SLLLTTLDLSGNNLSGPVSSIMS), and 358 to 384 (TTLHTLDLSSNSLTGELPLLTGGCVLL). The N-linked (GlcNAc...) asparagine glycan is linked to Asn-92. 2 positions are modified to phosphoserine; by HT1: Ser-100 and Ser-102. Asn-103 is a glycosylation site (N-linked (GlcNAc...) asparagine). 2 positions are modified to phosphoserine; by HT1: Ser-105 and Ser-126. 2 N-linked (GlcNAc...) asparagine glycosylation sites follow: Asn-146 and Asn-153. The N-linked (GlcNAc...) asparagine glycan is linked to Asn-196. A glycan (N-linked (GlcNAc...) asparagine) is linked at Asn-239. Phosphoserine; by HT1 is present on Ser-262. Asn-269 carries N-linked (GlcNAc...) asparagine glycosylation. Residue Ser-278 is modified to Phosphoserine; by HT1. A Phosphothreonine; by HT1 modification is found at Thr-280. Ser-281 bears the Phosphoserine; by HT1 mark. At Ser-325 the chain carries Phosphoserine; by HT1. Residue Asn-347 is glycosylated (N-linked (GlcNAc...) asparagine). An N-linked (GlcNAc...) asparagine glycan is attached at Asn-394. 8 LRR repeats span residues 401-425 (WENIEYLDLSQNHFTGSFPDATPQL), 426-449 (LRANHLNLSYNKLTGSLPERIPTH), 450-474 (YPKLRVLDISSNSLEGPIPGALLSM), 476-498 (TLEEIHLQNNGMTGNIGPLPSSG), 499-521 (SRIRLLDLSHNRFDGDLPGVFGS), 522-546 (LTNLQVLNLAANNLSGSLPSSMNDI), 548-570 (SLSSLDVSQNHFTGPLPSNLSSN), and 572-592 (MAFNVSYNDLSGTVPENLKNF). Tyr-406 is modified (phosphotyrosine; by HT1). Residue Ser-410 is modified to Phosphoserine; by HT1. Thr-415 carries the post-translational modification Phosphothreonine; by HT1. At Ser-417 the chain carries Phosphoserine; by HT1. N-linked (GlcNAc...) asparagine glycosylation is present at Asn-432. Position 434 is a phosphoserine; by HT1 (Ser-434). Asn-534, Asn-566, and Asn-575 each carry an N-linked (GlcNAc...) asparagine glycan. 3 positions are modified to phosphoserine; by HT1: Ser-613, Ser-614, and Ser-616. Asn-621 carries N-linked (GlcNAc...) asparagine glycosylation. The chain crosses the membrane as a helical span at residues 631–651 (VIIVSCAVALIILILVAILLF). The Cytoplasmic portion of the chain corresponds to 652 to 1053 (CICKSRRREE…KTIYEDLSSI (402 aa)). The span at 662–671 (RSITGKETNR) shows a compositional bias: basic and acidic residues. The segment at 662-684 (RSITGKETNRRAQTIPSGSGGGM) is disordered. Phosphothreonine; by HT1 occurs at positions 669 and 675. Residues Ser-678, Ser-680, Ser-698, Ser-699, and Ser-700 each carry the phosphoserine; by HT1 modification. At Ser-704 the chain carries Phosphoserine. Thr-713 bears the Phosphothreonine; by HT1 mark. Ser-716 and Ser-718 each carry phosphoserine; by HT1. At Thr-720 the chain carries Phosphothreonine; by HT1. Phosphoserine; by HT1 occurs at positions 721, 724, and 760. Thr-764 is modified (phosphothreonine; by HT1). Position 769 is a phosphoserine; by HT1 (Ser-769). The 284-residue stretch at 770–1053 (RAPAEVLGRS…KTIYEDLSSI (284 aa)) folds into the Protein kinase domain. Residues 776-784 (LGRSSHGTS) and Lys-798 contribute to the ATP site. Thr-928 and Thr-1010 each carry phosphothreonine; by HT1. Ser-1015 carries the phosphoserine; by HT1 modification. Thr-1045 bears the Phosphothreonine; by HT1 mark. Tyr-1047 carries the post-translational modification Phosphotyrosine; by HT1. A phosphoserine; by HT1 mark is found at Ser-1051 and Ser-1052.

It belongs to the protein kinase superfamily. Ser/Thr protein kinase family. As to quaternary structure, interacts with SLAC1 (via N-terminus). Binds to ABI2, but not ABI1. Interacts with CPK3. Post-translationally, phosphorylated by HT1; this phosphorylation is inhibited by MPK12 and MPK4. Expressed in guard cells and in the vasculature of roots and leaves.

The protein resides in the cell membrane. It carries out the reaction L-seryl-[protein] + ATP = O-phospho-L-seryl-[protein] + ADP + H(+). It catalyses the reaction L-threonyl-[protein] + ATP = O-phospho-L-threonyl-[protein] + ADP + H(+). Its activity is regulated as follows. Negatively regulated by ABI2. Its function is as follows. Receptor kinase acting as an early component in abscisic acid (ABA) signaling. Required for darkness, ABA, high CO(2) and hydrogen peroxide (H(2)O(2)) induction of S-type anion currents in guard cells leading to stomatal closure, possibly via the phosphorylation and activation of the anion channel SLAC1 and as a scaffolding component. Seems to act in parallel with SRK2E/OST1 in the ABA signaling pathway which regulates stomatal movement. Binds ATP. Involved in the local and/or systemic stomatal responses (e.g. stomatal closure) to light stress. The protein is LRR receptor-like serine/threonine-protein kinase GHR1 of Arabidopsis thaliana (Mouse-ear cress).